Reading from the N-terminus, the 284-residue chain is MQNQVIQLGNIEIGNNKPFVLFGGMNVLESRDMAMQVCEKYVEVTQKLGVPYIFKASFDKANRSSIHSYRGPGMEEGLKIFQELKETFGVKVITDVHEIYQCRPVAEVVDIIQLPAFLARQTDLVEAMARTGAVINVKKPQFLSPGQIGNIVEKIAECGNNKVILCDRGTNFGYDNLVVDMLGFNIMKKVSQGCPVIFDVTHSLQCRDPFGAASGGRRDQVTELARSGMAIGLAGLFLESHPNPNQAKCDGPSALPLSKLEPFIAQMKAIDDLVKSFEEIDTSN.

This sequence belongs to the KdsA family.

It localises to the cytoplasm. It catalyses the reaction D-arabinose 5-phosphate + phosphoenolpyruvate + H2O = 3-deoxy-alpha-D-manno-2-octulosonate-8-phosphate + phosphate. Its pathway is carbohydrate biosynthesis; 3-deoxy-D-manno-octulosonate biosynthesis; 3-deoxy-D-manno-octulosonate from D-ribulose 5-phosphate: step 2/3. It functions in the pathway bacterial outer membrane biogenesis; lipopolysaccharide biosynthesis. The sequence is that of 2-dehydro-3-deoxyphosphooctonate aldolase from Histophilus somni (strain 129Pt) (Haemophilus somnus).